The chain runs to 423 residues: Methylenetetrahydrofolate--tRNA-(uracil-5-)-methyltransferase TrmFO 2 (423 aa).

Position 8–13 (8–13 (GAGLSG)) interacts with FAD.

This sequence belongs to the MnmG family. TrmFO subfamily. FAD serves as cofactor.

It is found in the cytoplasm. It catalyses the reaction uridine(54) in tRNA + (6R)-5,10-methylene-5,6,7,8-tetrahydrofolate + NADH + H(+) = 5-methyluridine(54) in tRNA + (6S)-5,6,7,8-tetrahydrofolate + NAD(+). The catalysed reaction is uridine(54) in tRNA + (6R)-5,10-methylene-5,6,7,8-tetrahydrofolate + NADPH + H(+) = 5-methyluridine(54) in tRNA + (6S)-5,6,7,8-tetrahydrofolate + NADP(+). Catalyzes the folate-dependent formation of 5-methyl-uridine at position 54 (M-5-U54) in all tRNAs. The protein is Methylenetetrahydrofolate--tRNA-(uracil-5-)-methyltransferase TrmFO 2 of Mycoplasma capricolum subsp. capricolum (strain California kid / ATCC 27343 / NCTC 10154).